Here is an 874-residue protein sequence, read N- to C-terminus: Cyanophycin synthetase (874 aa).

The region spanning 224-480 is the ATP-grasp domain; the sequence is KTTLAEAGIP…VAAPVIDMLF (257 aa). ATP is bound at residue 495–501; it reads GTNGKTT.

This sequence in the C-terminal section; belongs to the MurCDEF family. In terms of assembly, homodimer.

It catalyses the reaction [L-4-(L-arginin-2-N-yl)aspartate](n) + L-aspartate + ATP = [L-4-(L-arginin-2-N-yl)aspartate](n)-L-aspartate + ADP + phosphate + H(+). The catalysed reaction is [L-4-(L-arginin-2-N-yl)aspartate](n)-L-aspartate + L-arginine + ATP = [L-4-(L-arginin-2-N-yl)aspartate](n+1) + ADP + phosphate + H(+). Functionally, catalyzes the ATP-dependent polymerization of arginine and aspartate to multi-L-arginyl-poly-L-aspartic acid (cyanophycin; a water-insoluble reserve polymer). The protein is Cyanophycin synthetase (cphA) of Geminocystis herdmanii (strain PCC 6308) (Synechocystis sp. (strain PCC 6308)).